We begin with the raw amino-acid sequence, 299 residues long: Pyridoxal 5'-phosphate synthase subunit PdxS (299 aa).

D24 contacts D-ribose 5-phosphate. The active-site Schiff-base intermediate with D-ribose 5-phosphate is K81. G153 contacts D-ribose 5-phosphate. R165 provides a ligand contact to D-glyceraldehyde 3-phosphate. Residues G219 and 240 to 241 (GS) each bind D-ribose 5-phosphate.

The protein belongs to the PdxS/SNZ family. In the presence of PdxT, forms a dodecamer of heterodimers.

The catalysed reaction is aldehydo-D-ribose 5-phosphate + D-glyceraldehyde 3-phosphate + L-glutamine = pyridoxal 5'-phosphate + L-glutamate + phosphate + 3 H2O + H(+). The protein operates within cofactor biosynthesis; pyridoxal 5'-phosphate biosynthesis. In terms of biological role, catalyzes the formation of pyridoxal 5'-phosphate from ribose 5-phosphate (RBP), glyceraldehyde 3-phosphate (G3P) and ammonia. The ammonia is provided by the PdxT subunit. Can also use ribulose 5-phosphate and dihydroxyacetone phosphate as substrates, resulting from enzyme-catalyzed isomerization of RBP and G3P, respectively. This chain is Pyridoxal 5'-phosphate synthase subunit PdxS, found in Methanococcus maripaludis (strain C7 / ATCC BAA-1331).